Here is a 246-residue protein sequence, read N- to C-terminus: Putative L,D-transpeptidase YafK (246 aa).

Positions 1–19 are cleaved as a signal peptide; sequence MRKIALILAMLLIPCVSFA. The region spanning 44 to 174 is the L,D-TPase catalytic domain; it reads VYIQIFKEER…GQPSVQVSIY (131 aa). Catalysis depends on His135, which acts as the Proton donor/acceptor. Catalysis depends on Cys143, which acts as the Nucleophile.

The protein belongs to the YkuD family.

It participates in cell wall biogenesis; peptidoglycan biosynthesis. The polypeptide is Putative L,D-transpeptidase YafK (yafK) (Escherichia coli O157:H7).